The sequence spans 235 residues: Putative N-acetylmannosamine-6-phosphate 2-epimerase (235 aa).

Belongs to the NanE family.

It catalyses the reaction an N-acyl-D-glucosamine 6-phosphate = an N-acyl-D-mannosamine 6-phosphate. Its pathway is amino-sugar metabolism; N-acetylneuraminate degradation; D-fructose 6-phosphate from N-acetylneuraminate: step 3/5. Functionally, converts N-acetylmannosamine-6-phosphate (ManNAc-6-P) to N-acetylglucosamine-6-phosphate (GlcNAc-6-P). In Aliivibrio fischeri (strain ATCC 700601 / ES114) (Vibrio fischeri), this protein is Putative N-acetylmannosamine-6-phosphate 2-epimerase.